The primary structure comprises 572 residues: 2-isopropylmalate synthase (572 aa).

The 275-residue stretch at 31-305 (PIWMSTDLRD…DPGLDFSNIN (275 aa)) folds into the Pyruvate carboxyltransferase domain. 4 residues coordinate Mg(2+): Asp40, His244, His246, and Asn280. The interval 437–572 (NTAPIHYVGH…MNDAAESVGV (136 aa)) is regulatory domain.

This sequence belongs to the alpha-IPM synthase/homocitrate synthase family. LeuA type 2 subfamily. As to quaternary structure, homodimer. The cofactor is Mg(2+).

Its subcellular location is the cytoplasm. It carries out the reaction 3-methyl-2-oxobutanoate + acetyl-CoA + H2O = (2S)-2-isopropylmalate + CoA + H(+). It functions in the pathway amino-acid biosynthesis; L-leucine biosynthesis; L-leucine from 3-methyl-2-oxobutanoate: step 1/4. Its function is as follows. Catalyzes the condensation of the acetyl group of acetyl-CoA with 3-methyl-2-oxobutanoate (2-ketoisovalerate) to form 3-carboxy-3-hydroxy-4-methylpentanoate (2-isopropylmalate). The polypeptide is 2-isopropylmalate synthase (Paraburkholderia phytofirmans (strain DSM 17436 / LMG 22146 / PsJN) (Burkholderia phytofirmans)).